The following is a 249-amino-acid chain: tRNA (guanine-N(1)-)-methyltransferase (249 aa).

S-adenosyl-L-methionine-binding positions include G113 and 132–137; that span reads VGDFVV.

It belongs to the RNA methyltransferase TrmD family. In terms of assembly, homodimer.

The protein localises to the cytoplasm. It catalyses the reaction guanosine(37) in tRNA + S-adenosyl-L-methionine = N(1)-methylguanosine(37) in tRNA + S-adenosyl-L-homocysteine + H(+). In terms of biological role, specifically methylates guanosine-37 in various tRNAs. In Desulforudis audaxviator (strain MP104C), this protein is tRNA (guanine-N(1)-)-methyltransferase.